We begin with the raw amino-acid sequence, 29 residues long: Kalata-B15 (29 aa).

The cyclopeptide (Gly-Asp) cross-link spans 1–29; sequence GLPVCGESCFGGSCYTPGCSCTWPICTRD. 3 disulfide bridges follow: Cys-5-Cys-19, Cys-9-Cys-21, and Cys-14-Cys-26.

In terms of processing, this is a cyclic peptide.

Probably participates in a plant defense mechanism. This chain is Kalata-B15, found in Oldenlandia affinis.